The sequence spans 273 residues: NH(3)-dependent NAD(+) synthetase (273 aa).

ATP is bound at residue 47–54 (GISGGQDS). Asp-53 is a Mg(2+) binding site. Arg-139 is a binding site for deamido-NAD(+). Thr-159 is a binding site for ATP. A Mg(2+)-binding site is contributed by Glu-164. Deamido-NAD(+) is bound by residues Lys-172 and Asp-179. Residues Lys-188 and Thr-210 each coordinate ATP. 259–260 (HK) contributes to the deamido-NAD(+) binding site.

This sequence belongs to the NAD synthetase family. In terms of assembly, homodimer.

The enzyme catalyses deamido-NAD(+) + NH4(+) + ATP = AMP + diphosphate + NAD(+) + H(+). The protein operates within cofactor biosynthesis; NAD(+) biosynthesis; NAD(+) from deamido-NAD(+) (ammonia route): step 1/1. In terms of biological role, catalyzes the ATP-dependent amidation of deamido-NAD to form NAD. Uses ammonia as a nitrogen source. This Staphylococcus haemolyticus (strain JCSC1435) protein is NH(3)-dependent NAD(+) synthetase.